The sequence spans 725 residues: ABC transporter G family member 19 (725 aa).

Residues 73–325 (LNFNNLQYDV…FSDFGRPIPE (253 aa)) form the ABC transporter domain. Residue 117-124 (GASGAGKS) coordinates ATP. An ABC transmembrane type-2 domain is found at 419 to 629 (FETFILAKRY…PYEAVLINEF (211 aa)). 7 helical membrane-spanning segments follow: residues 438–458 (LVGT…TVYW), 473–493 (LFAF…PVFI), 515–535 (ISHS…FSAI), 537–557 (FWTV…LLIY), 577–597 (IMLC…LSGF), 606–626 (FYWT…AVLI), and 698–718 (LWIT…ALLF).

The protein belongs to the ABC transporter superfamily. ABCG family. Eye pigment precursor importer (TC 3.A.1.204) subfamily.

Its subcellular location is the vacuole membrane. Confers selective resistance to kanamycin. The protein is ABC transporter G family member 19 (ABCG19) of Arabidopsis thaliana (Mouse-ear cress).